We begin with the raw amino-acid sequence, 439 residues long: Fibroleukin (439 aa).

Residues 1–23 (MKLANWYWLSSAVLATYGFLVVA) form the signal peptide. The N-linked (GlcNAc...) asparagine glycan is linked to Asn25. Positions 73–165 (SRIEEVFKEV…GRLEKLNLVN (93 aa)) form a coiled coil. Positions 103–126 (ADDNGDPGRNGLLLPSTGAPGEVG) are disordered. 4 N-linked (GlcNAc...) asparagine glycosylation sites follow: Asn179, Asn235, Asn263, and Asn336. One can recognise a Fibrinogen C-terminal domain in the interval 204–436 (PVQHLIYKDC…EAKMMIRPKH (233 aa)). Residues Cys213 and Cys242 are joined by a disulfide bond. Residues Cys371 and Cys384 are joined by a disulfide bond.

Homotetramer; disulfide-linked. Constitutively expressed in cytotoxic T-cells.

It is found in the secreted. May play a role in physiologic lymphocyte functions at mucosal sites. This chain is Fibroleukin (FGL2), found in Homo sapiens (Human).